We begin with the raw amino-acid sequence, 250 residues long: MAGSEELGLREDTLRVLAAFLRRGEAAGSPVPTPPRSPAQEEPTDFLSRLRRCLPCSLGRGAAPSESPRPCSLPIRPCYGLEPGPATPDFYALVAQRLEQLVQEQLKSPPSPELQGPPSTEKEAILRRLVALLEEEAEVINQKLASDPALRSKLVRLSSDSFARLVELFCSRDDSSRPSRACPGPPPPSPEPLARLALAMELSRRVAGLGGTLAGLSVEHVHSFTPWIQAHGGWEGILAVSPVDLNLPLD.

The interval 24-46 (GEAAGSPVPTPPRSPAQEEPTDF) is disordered. The residue at position 29 (serine 29) is a Phosphoserine. The residue at position 33 (threonine 33) is a Phosphothreonine. Serine 37 is subject to Phosphoserine. Arginine 60 bears the Omega-N-methylarginine mark. A phosphoserine mark is found at serine 111, serine 158, serine 159, serine 161, and serine 189. Positions 227–238 (WIQAHGGWEGIL) match the BH2 motif.

It belongs to the Bcl-2 family. In terms of tissue distribution, expressed mainly in breast, thymus, prostate, fetal liver, colon, placenta, pancreas, small intestine, spinal cord, kidney, and bone marrow and to a lesser extent in many other tissues. Isoform 2 is primarily expressed in skeletal muscle.

This chain is Bcl-2-like protein 12, found in Homo sapiens (Human).